A 388-amino-acid chain; its full sequence is Pyruvate dehydrogenase E1 component subunit alpha, testis-specific form, mitochondrial (388 aa).

A mitochondrion-targeting transit peptide spans 1–27 (MLAAFISRVLRRVAQKSARRVLVASRN). The pyruvate site is built by histidine 90, tyrosine 116, arginine 117, glycine 163, valine 165, aspartate 194, glycine 195, alanine 196, asparagine 223, and tyrosine 225. Positions 116, 117, 163, 165, 194, 195, 196, and 223 each coordinate thiamine diphosphate. Aspartate 194 provides a ligand contact to Mg(2+). The Mg(2+) site is built by asparagine 223 and tyrosine 225. Position 290 (histidine 290) interacts with thiamine diphosphate. Serine 291 carries the post-translational modification Phosphoserine; by PDK1, PDK2, PDK3 and PDK4. Serine 293 carries the phosphoserine modification. Serine 298 carries the phosphoserine; by PDK3 modification.

In terms of assembly, heterotetramer of two PDHA2 and two PDHB subunits. The heterotetramer interacts with DLAT, and is part of the multimeric pyruvate dehydrogenase complex that contains multiple copies of pyruvate dehydrogenase (E1), dihydrolipoamide acetyltransferase (DLAT, E2) and lipoamide dehydrogenase (DLD, E3). These subunits are bound to an inner core composed of about 48 DLAT and 12 PDHX molecules. The cofactor is thiamine diphosphate. It depends on Mg(2+) as a cofactor. In terms of processing, phosphorylation at Ser-291, Ser-293 and Ser-298 by PDK family kinases inactivates the enzyme; for this phosphorylation at a single site is sufficient. Phosphorylation at Ser-293 interferes with access to active site, and thereby inactivates the enzyme. Dephosphorylation at all three sites, i.e. at Ser-291, Ser-293 and Ser-298, is required for reactivation. As to expression, testis. Expressed in postmeiotic spermatogenic cells.

It is found in the mitochondrion matrix. The catalysed reaction is N(6)-[(R)-lipoyl]-L-lysyl-[protein] + pyruvate + H(+) = N(6)-[(R)-S(8)-acetyldihydrolipoyl]-L-lysyl-[protein] + CO2. Its activity is regulated as follows. Pyruvate dehydrogenase activity is inhibited by phosphorylation of PDHA2; it is reactivated by dephosphorylation. Its function is as follows. The pyruvate dehydrogenase complex catalyzes the overall conversion of pyruvate to acetyl-CoA and CO(2), and thereby links the glycolytic pathway to the tricarboxylic cycle. This Homo sapiens (Human) protein is Pyruvate dehydrogenase E1 component subunit alpha, testis-specific form, mitochondrial (PDHA2).